Reading from the N-terminus, the 729-residue chain is Methionine--tRNA ligase (729 aa).

The short motif at 12–22 (PYVNNIPHLGN) is the 'HIGH' region element. Residues cysteine 143, cysteine 146, cysteine 155, and cysteine 158 each coordinate Zn(2+). The 'KMSKS' region motif lies at 330-334 (KFSKS). ATP is bound at residue lysine 333. In terms of domain architecture, tRNA-binding spans 565-670 (FSEQVCLKVV…DNPIPGERII (106 aa)).

The protein belongs to the class-I aminoacyl-tRNA synthetase family. MetG type 1 subfamily. As to quaternary structure, homodimer. The cofactor is Zn(2+).

It is found in the cytoplasm. The enzyme catalyses tRNA(Met) + L-methionine + ATP = L-methionyl-tRNA(Met) + AMP + diphosphate. In terms of biological role, is required not only for elongation of protein synthesis but also for the initiation of all mRNA translation through initiator tRNA(fMet) aminoacylation. The sequence is that of Methionine--tRNA ligase from Borrelia hermsii (strain HS1 / DAH).